The chain runs to 391 residues: Processive diacylglycerol beta-glucosyltransferase (391 aa).

This sequence belongs to the glycosyltransferase 28 family. UgtP subfamily.

It is found in the cell membrane. The catalysed reaction is a 1,2-diacyl-3-O-(beta-D-glucopyranosyl)-sn-glycerol + UDP-alpha-D-glucose = a 1,2-diacyl-3-O-(beta-D-Glc-(1-&gt;6)-beta-D-Glc)-sn-glycerol + UDP + H(+). The enzyme catalyses a 1,2-diacyl-sn-glycerol + UDP-alpha-D-glucose = a 1,2-diacyl-3-O-(beta-D-glucopyranosyl)-sn-glycerol + UDP + H(+). It functions in the pathway glycolipid metabolism; diglucosyl-diacylglycerol biosynthesis. Processive glucosyltransferase involved in the biosynthesis of both the bilayer- and non-bilayer-forming membrane glucolipids. Is able to successively transfer two glucosyl residues to diacylglycerol (DAG), thereby catalyzing the formation of beta-monoglucosyl-DAG (3-O-(beta-D-glucopyranosyl)-1,2-diacyl-sn-glycerol) and beta-diglucosyl-DAG (3-O-(beta-D-glucopyranosyl-beta-(1-&gt;6)-D-glucopyranosyl)-1,2-diacyl-sn-glycerol). Beta-diglucosyl-DAG is the predominant glycolipid found in Bacillales and is also used as a membrane anchor for lipoteichoic acid (LTA). In Staphylococcus aureus (strain bovine RF122 / ET3-1), this protein is Processive diacylglycerol beta-glucosyltransferase.